A 232-amino-acid chain; its full sequence is Orotidine 5'-phosphate decarboxylase (232 aa).

Residues Asp13, Lys35, 62–71, Thr121, Arg182, Gln191, Gly211, and Arg212 each bind substrate; that span reads DLKFHDIPNT. Catalysis depends on Lys64, which acts as the Proton donor.

Belongs to the OMP decarboxylase family. Type 1 subfamily. In terms of assembly, homodimer.

The catalysed reaction is orotidine 5'-phosphate + H(+) = UMP + CO2. Its pathway is pyrimidine metabolism; UMP biosynthesis via de novo pathway; UMP from orotate: step 2/2. Catalyzes the decarboxylation of orotidine 5'-monophosphate (OMP) to uridine 5'-monophosphate (UMP). The chain is Orotidine 5'-phosphate decarboxylase from Teredinibacter turnerae (strain ATCC 39867 / T7901).